A 561-amino-acid polypeptide reads, in one-letter code: Urocanate hydratase (561 aa).

Residues 52 to 53 (GG), Gln-130, 176 to 178 (GMG), Glu-196, Arg-201, 242 to 243 (NA), 263 to 267 (QTSAH), 273 to 274 (YL), and Tyr-322 contribute to the NAD(+) site. Cys-410 is a catalytic residue. Gly-492 contributes to the NAD(+) binding site.

This sequence belongs to the urocanase family. The cofactor is NAD(+).

It localises to the cytoplasm. The catalysed reaction is 4-imidazolone-5-propanoate = trans-urocanate + H2O. It participates in amino-acid degradation; L-histidine degradation into L-glutamate; N-formimidoyl-L-glutamate from L-histidine: step 2/3. In terms of biological role, catalyzes the conversion of urocanate to 4-imidazolone-5-propionate. The chain is Urocanate hydratase from Salmonella gallinarum (strain 287/91 / NCTC 13346).